The following is a 122-amino-acid chain: Large ribosomal subunit protein uL14 (122 aa).

Belongs to the universal ribosomal protein uL14 family. Part of the 50S ribosomal subunit. Forms a cluster with proteins L3 and L19. In the 70S ribosome, L14 and L19 interact and together make contacts with the 16S rRNA in bridges B5 and B8.

Binds to 23S rRNA. Forms part of two intersubunit bridges in the 70S ribosome. The protein is Large ribosomal subunit protein uL14 of Leifsonia xyli subsp. xyli (strain CTCB07).